A 558-amino-acid polypeptide reads, in one-letter code: Armadillo repeat-containing X-linked protein 5 (558 aa).

Basic and acidic residues-rich tracts occupy residues 1 to 14 (MVDS…RGKA) and 139 to 156 (KSHD…REET). Disordered regions lie at residues 1–35 (MVDS…GKTQ) and 139–165 (KSHD…SSDE). The stretch at 300-339 (CKSRGFSLEPKEFDKLVALLKLTKDPFIHEIATMIMGISP) is one ARM 1 repeat. The tract at residues 369–388 (HPGALSMVDDSSESSEEPKS) is disordered. ARM repeat units lie at residues 422–461 (IKFE…CLSK), 463–503 (HANT…NINF), and 520–558 (SELI…ILKL).

The protein belongs to the eutherian X-chromosome-specific Armcx family.

This chain is Armadillo repeat-containing X-linked protein 5 (ARMCX5), found in Homo sapiens (Human).